The sequence spans 174 residues: Co-chaperone protein HscB homolog (174 aa).

The 73-residue stretch at 2–74 (NYFELFKFPP…IRRAEHMLSL (73 aa)) folds into the J domain.

It belongs to the HscB family. In terms of assembly, interacts with HscA and stimulates its ATPase activity.

Its function is as follows. Co-chaperone involved in the maturation of iron-sulfur cluster-containing proteins. Seems to help targeting proteins to be folded toward HscA. The chain is Co-chaperone protein HscB homolog from Shewanella baltica (strain OS195).